The sequence spans 152 residues: Endoribonuclease YbeY (152 aa).

Zn(2+) is bound by residues H113, H117, and H123.

The protein belongs to the endoribonuclease YbeY family. It depends on Zn(2+) as a cofactor.

It is found in the cytoplasm. Its function is as follows. Single strand-specific metallo-endoribonuclease involved in late-stage 70S ribosome quality control and in maturation of the 3' terminus of the 16S rRNA. This chain is Endoribonuclease YbeY, found in Wolbachia pipientis subsp. Culex pipiens (strain wPip).